A 192-amino-acid polypeptide reads, in one-letter code: Elongation factor P (192 aa).

This sequence belongs to the elongation factor P family.

The protein localises to the cytoplasm. The protein operates within protein biosynthesis; polypeptide chain elongation. Its function is as follows. Involved in peptide bond synthesis. Stimulates efficient translation and peptide-bond synthesis on native or reconstituted 70S ribosomes in vitro. Probably functions indirectly by altering the affinity of the ribosome for aminoacyl-tRNA, thus increasing their reactivity as acceptors for peptidyl transferase. The protein is Elongation factor P of Borrelia garinii subsp. bavariensis (strain ATCC BAA-2496 / DSM 23469 / PBi) (Borreliella bavariensis).